Reading from the N-terminus, the 341-residue chain is MQNLTVALDAMGGDFGPRVTVPAAVQALSYFPELKVILIGDRNAITSQLSSLGRMPDSRLSIQHCDRVISNSEKPSLALRNSQGSSMRAAIDLVAESQADACVSGGNTGALMALSRFRLKLLPGIDRPALVSALPTASGNRTWMLDLGANVSSDADSLFQFAVMGSALAEQHLGRVPRVAILNIGAEEIKGNDLVKRCAEMLSNTQSVNFIGYIEGNQLLQDAADVVVCDGFVGNVCLKTCEGTAQLFIDKLKTRMMASTIKGWIARMLFSELFTELKTLNPDQYNGASLLGLRGIVIKSHGSADVSAVVNAIGEAVHEVKRQVPSRISDRLEAVLLERHY.

The protein belongs to the PlsX family. Homodimer. Probably interacts with PlsY.

The protein resides in the cytoplasm. The catalysed reaction is a fatty acyl-[ACP] + phosphate = an acyl phosphate + holo-[ACP]. It participates in lipid metabolism; phospholipid metabolism. Its function is as follows. Catalyzes the reversible formation of acyl-phosphate (acyl-PO(4)) from acyl-[acyl-carrier-protein] (acyl-ACP). This enzyme utilizes acyl-ACP as fatty acyl donor, but not acyl-CoA. This is Phosphate acyltransferase from Vibrio atlanticus (strain LGP32) (Vibrio splendidus (strain Mel32)).